A 475-amino-acid chain; its full sequence is D-lactate dehydrogenase (475 aa).

In terms of domain architecture, FAD-binding PCMH-type spans 43–222; the sequence is YGKARPEVLV…TELTLKVIPA (180 aa).

The protein belongs to the FAD-binding oxidoreductase/transferase type 4 family. Requires FAD as cofactor. The cofactor is Zn(2+).

It catalyses the reaction (R)-lactate + A = pyruvate + AH2. Catalyzes the dehydrogenation of (R)-lactate (D-lactate) to pyruvate. Active in vitro with the artificial electron acceptor 2,6-dichlorophenolindophenol (DCPIP), but not with NAD, NADP, or cytochrome c. Also displays a very low oxidase activity in vitro on D-lactate and L-lactate with O2 as the electron acceptor, but this activity is most likely not physiological. In Anaerostipes hadrus, this protein is D-lactate dehydrogenase.